A 103-amino-acid chain; its full sequence is Large ribosomal subunit protein bL21 (103 aa).

This sequence belongs to the bacterial ribosomal protein bL21 family. As to quaternary structure, part of the 50S ribosomal subunit. Contacts protein L20.

Its function is as follows. This protein binds to 23S rRNA in the presence of protein L20. This is Large ribosomal subunit protein bL21 from Alkaliphilus oremlandii (strain OhILAs) (Clostridium oremlandii (strain OhILAs)).